The chain runs to 354 residues: Guanine nucleotide-binding protein G(i) subunit alpha-1 (354 aa).

Gly2 is lipidated: N-myristoyl glycine. The S-palmitoyl cysteine moiety is linked to residue Cys3. Residues 32 to 354 (REVKLLLLGA…KNNLKDCGLF (323 aa)) form the G-alpha domain. The tract at residues 35–48 (KLLLLGAGESGKST) is G1 motif. Residues 43 to 48 (ESGKST), 150 to 151 (DS), and 175 to 178 (LRTR) each bind GTP. A Mg(2+)-binding site is contributed by Ser47. The tract at residues 173–181 (DVLRTRVKT) is G2 motif. Thr181 serves as a coordination point for Mg(2+). The tract at residues 196–205 (FKMFDVGGQR) is G3 motif. Residues 200–204 (DVGGQ), 269–272 (NKKD), and Ala326 contribute to the GTP site. The tract at residues 265–272 (ILFLNKKD) is G4 motif. Residues 324–329 (TCATDT) form a G5 motif region.

It belongs to the G-alpha family. G(i/o/t/z) subfamily. In terms of assembly, heterotrimeric G proteins are composed of 3 units; alpha, beta and gamma. The alpha chain contains the guanine nucleotide binding site. Part of a spindle orientation complex. Identified in complex with the beta subunit GNB1 and the gamma subunit GNG1. Identified in complex with the beta subunit GNB1 and the gamma subunit GNG2. GTP binding causes dissociation of the heterotrimer, liberating the individual subunits so that they can interact with downstream effector proteins. Post-translationally, myristoylation at Gly-2 is required for membrane anchoring before palmitoylation. Palmitoylation at Cys-3 varies with membrane lipid composition.

It is found in the nucleus. It localises to the cytoplasm. The protein resides in the cell membrane. The protein localises to the cytoskeleton. Its subcellular location is the microtubule organizing center. It is found in the centrosome. It localises to the cell cortex. The protein resides in the membrane. The catalysed reaction is GTP + H2O = GDP + phosphate + H(+). Functionally, guanine nucleotide-binding proteins (G proteins) function as transducers downstream of G protein-coupled receptors (GPCRs) in numerous signaling cascades. The alpha chain contains the guanine nucleotide binding site and alternates between an active, GTP-bound state and an inactive, GDP-bound state. Signaling by an activated GPCR promotes GDP release and GTP binding. The alpha subunit has a low GTPase activity that converts bound GTP to GDP, thereby terminating the signal. Both GDP release and GTP hydrolysis are modulated by numerous regulatory proteins. Signaling is mediated via effector proteins, such as adenylate cyclase. Inhibits adenylate cyclase activity of ADCY1, ADCY5 and ADCY6, leading to decreased intracellular cAMP levels. Required for cortical dynein-dynactin complex recruitment during metaphase. The chain is Guanine nucleotide-binding protein G(i) subunit alpha-1 (GNAI1) from Gallus gallus (Chicken).